The primary structure comprises 35 residues: Photosystem II reaction center protein Psb30 (35 aa).

The helical transmembrane segment at 7-27 (VFVQLALLALIVLAGPAVILL) threads the bilayer.

This sequence belongs to the Psb30/Ycf12 family. PSII is composed of 1 copy each of membrane proteins PsbA, PsbB, PsbC, PsbD, PsbE, PsbF, PsbH, PsbI, PsbJ, PsbK, PsbL, PsbM, PsbT, PsbX, PsbY, PsbZ, Psb30/Ycf12, peripheral proteins PsbO, CyanoQ (PsbQ), PsbU, PsbV and a large number of cofactors. It forms dimeric complexes.

The protein resides in the cellular thylakoid membrane. Functionally, a core subunit of photosystem II (PSII), probably helps stabilize the reaction center. This Synechococcus sp. (strain JA-2-3B'a(2-13)) (Cyanobacteria bacterium Yellowstone B-Prime) protein is Photosystem II reaction center protein Psb30.